The chain runs to 490 residues: Phenylacetaldehyde synthase (490 aa).

3 residues coordinate L-phenylalanine: Pro92, His193, and His308. Lys309 is modified (N6-(pyridoxal phosphate)lysine). Phe338 contacts L-phenylalanine.

The protein belongs to the group II decarboxylase family. As to quaternary structure, homodimer. It depends on pyridoxal 5'-phosphate as a cofactor. As to expression, expressed in roots, rosette leaves, stems, cauline leaves and flowers.

It catalyses the reaction L-phenylalanine + O2 + H2O + H(+) = 2-phenylacetaldehyde + H2O2 + NH4(+) + CO2. It carries out the reaction L-dopa + O2 + H2O + H(+) = 3,4-dihydroxyphenylacetaldehyde + H2O2 + NH4(+) + CO2. In terms of biological role, bifunctional enzyme that catalyzes the decarboxylation of L-phenylalanine to 2-phenylethylamine, which is then oxidized to form 2-phenylacetaldehyde, a constituent of floral scent. 2-phenylacetaldehyde is a precursor of 2-phenylethanol, another constituent of floral scent. Catalyzes both the decarboxylation and deamination of L-dopa to 3,4-dihydroxylphenylacetaldehyde (DHPAA). The sequence is that of Phenylacetaldehyde synthase from Arabidopsis thaliana (Mouse-ear cress).